The following is a 473-amino-acid chain: Photosystem II CP43 reaction center protein (473 aa).

A propeptide spanning residues 1-14 (MKTLYSLRRFYPVE) is cleaved from the precursor. Threonine 15 is modified (N-acetylthreonine). Threonine 15 is subject to Phosphothreonine. The next 5 helical transmembrane spans lie at 69-93 (LFEV…PHLA), 134-155 (LLGP…KDRN), 178-200 (KALY…RKIT), 255-275 (KPFA…LSYS), and 291-312 (WFNN…ASQA). [CaMn4O5] cluster is bound at residue glutamate 367. The helical transmembrane segment at 447-471 (RARAAAAGFEKGIDRDLEPVLSMTP) threads the bilayer.

It belongs to the PsbB/PsbC family. PsbC subfamily. In terms of assembly, PSII is composed of 1 copy each of membrane proteins PsbA, PsbB, PsbC, PsbD, PsbE, PsbF, PsbH, PsbI, PsbJ, PsbK, PsbL, PsbM, PsbT, PsbX, PsbY, PsbZ, Psb30/Ycf12, at least 3 peripheral proteins of the oxygen-evolving complex and a large number of cofactors. It forms dimeric complexes. The cofactor is Binds multiple chlorophylls and provides some of the ligands for the Ca-4Mn-5O cluster of the oxygen-evolving complex. It may also provide a ligand for a Cl- that is required for oxygen evolution. PSII binds additional chlorophylls, carotenoids and specific lipids..

Its subcellular location is the plastid. The protein localises to the chloroplast thylakoid membrane. In terms of biological role, one of the components of the core complex of photosystem II (PSII). It binds chlorophyll and helps catalyze the primary light-induced photochemical processes of PSII. PSII is a light-driven water:plastoquinone oxidoreductase, using light energy to abstract electrons from H(2)O, generating O(2) and a proton gradient subsequently used for ATP formation. The sequence is that of Photosystem II CP43 reaction center protein from Acorus calamus var. americanus (American sweet flag).